A 304-amino-acid chain; its full sequence is 6-dehydroglucose reductase (304 aa).

NADP(+) contacts are provided by tryptophan 28, arginine 29, and aspartate 56. Tyrosine 61 functions as the Proton donor in the catalytic mechanism. D-glucose-binding residues include tyrosine 61, histidine 133, and arginine 134. Residues serine 163, asparagine 164, glutamine 185, serine 215, leucine 217, glycine 219, glycine 268, serine 269, glutamine 270, and arginine 274 each coordinate NADP(+).

This sequence belongs to the aldo/keto reductase family.

The enzyme catalyses D-glucose + NADP(+) = 6-dehydro-D-glucose + NADPH + H(+). Functionally, part of the alkanesulfonate monooxygenase (sulfo-ASMO) pathway, a D-sulfoquinovose degradation pathway that enables the complete utilization of all carbons within sulfoquinovose (SQ) with concomitant production of inorganic sulfite. Catalyzes the NADP-dependent reduction of 6-dehydro-D-glucose to D-glucose. Can also catalyze the reversible reaction, the formation of 6-dehydro-D-glucose from D-glucose in the presence of NADP(+). This is 6-dehydroglucose reductase from Novosphingobium aromaticivorans (strain ATCC 700278 / DSM 12444 / CCUG 56034 / CIP 105152 / NBRC 16084 / F199).